The chain runs to 144 residues: Ribosome-binding factor A (144 aa).

The segment at 120–144 (DKRRMAEAGREEDEAAPDDTTEDKA) is disordered. The span at 129–144 (REEDEAAPDDTTEDKA) shows a compositional bias: acidic residues.

It belongs to the RbfA family. Monomer. Binds 30S ribosomal subunits, but not 50S ribosomal subunits or 70S ribosomes.

It is found in the cytoplasm. Its function is as follows. One of several proteins that assist in the late maturation steps of the functional core of the 30S ribosomal subunit. Associates with free 30S ribosomal subunits (but not with 30S subunits that are part of 70S ribosomes or polysomes). Required for efficient processing of 16S rRNA. May interact with the 5'-terminal helix region of 16S rRNA. This Aeromonas salmonicida (strain A449) protein is Ribosome-binding factor A.